The chain runs to 252 residues: Protein A47 (252 aa).

The protein belongs to the orthopoxvirus A47 protein family.

The sequence is that of Protein A47 from Vaccinia virus (strain Western Reserve) (VACV).